Here is an 89-residue protein sequence, read N- to C-terminus: Elongation factor 1-beta (89 aa).

This sequence belongs to the EF-1-beta/EF-1-delta family.

Promotes the exchange of GDP for GTP in EF-1-alpha/GDP, thus allowing the regeneration of EF-1-alpha/GTP that could then be used to form the ternary complex EF-1-alpha/GTP/AAtRNA. This Methanothermobacter thermautotrophicus (strain ATCC 29096 / DSM 1053 / JCM 10044 / NBRC 100330 / Delta H) (Methanobacterium thermoautotrophicum) protein is Elongation factor 1-beta (ef1b).